Consider the following 214-residue polypeptide: Probable nicotinate-nucleotide adenylyltransferase (214 aa).

This sequence belongs to the NadD family.

It catalyses the reaction nicotinate beta-D-ribonucleotide + ATP + H(+) = deamido-NAD(+) + diphosphate. Its pathway is cofactor biosynthesis; NAD(+) biosynthesis; deamido-NAD(+) from nicotinate D-ribonucleotide: step 1/1. In terms of biological role, catalyzes the reversible adenylation of nicotinate mononucleotide (NaMN) to nicotinic acid adenine dinucleotide (NaAD). This is Probable nicotinate-nucleotide adenylyltransferase from Buchnera aphidicola subsp. Acyrthosiphon pisum (strain 5A).